Consider the following 543-residue polypeptide: Chaperonin GroEL (543 aa).

Residues 29-32 (TLGP), 86-90 (DGTTT), Gly413, 478-480 (NAA), and Asp494 contribute to the ATP site.

Belongs to the chaperonin (HSP60) family. Forms a cylinder of 14 subunits composed of two heptameric rings stacked back-to-back. Interacts with the co-chaperonin GroES.

Its subcellular location is the cytoplasm. It carries out the reaction ATP + H2O + a folded polypeptide = ADP + phosphate + an unfolded polypeptide.. Functionally, together with its co-chaperonin GroES, plays an essential role in assisting protein folding. The GroEL-GroES system forms a nano-cage that allows encapsulation of the non-native substrate proteins and provides a physical environment optimized to promote and accelerate protein folding. In Lactobacillus johnsonii (strain CNCM I-12250 / La1 / NCC 533), this protein is Chaperonin GroEL.